The sequence spans 160 residues: Urease accessory protein UreE (160 aa).

This sequence belongs to the UreE family.

Its subcellular location is the cytoplasm. Functionally, involved in urease metallocenter assembly. Binds nickel. Probably functions as a nickel donor during metallocenter assembly. This chain is Urease accessory protein UreE, found in Acinetobacter baumannii (strain ACICU).